Consider the following 473-residue polypeptide: H(+)/Cl(-) exchange transporter ClcA (473 aa).

At 1-32 the chain is on the cytoplasmic side; it reads MKTDTPSLETPQAARLRRRQLIRQLLERDKTP. The chain crosses the membrane as a helical span at residues 33–69; the sequence is LAILFMAAVVGTLVGLAAVAFDKGVAWLQNQRMGALV. Over 70-76 the chain is Periplasmic; the sequence is HTADNYP. Residues 77 to 100 traverse the membrane as a helical segment; that stretch reads LLLTVAFLCSAVLAMFGYFLVRKY. The short motif at 106–110 is the Selectivity filter part_1 element; the sequence is GSGIP. Ser-107 provides a ligand contact to chloride. The segment at residues 109-116 is an intramembrane region (helical); the sequence is IPEIEGAL. Residues 117-123 are Cytoplasmic-facing; the sequence is EDQRPVR. A run of 2 helical transmembrane segments spans residues 124 to 141 and 148 to 166; these read WWRVLPVKFFGGLGTLGG and EGPTVQIGGNIGRMVLDIF. The short motif at 146 to 150 is the Selectivity filter part_2 element; the sequence is GREGP. Residues 167-176 lie on the Cytoplasmic side of the membrane; that stretch reads RLKGDEARHT. 2 intramembrane regions (helical) span residues 177–189 and 193–201; these read LLATGAAAGLAAA and PLAGILFII. Topologically, residues 202–214 are cytoplasmic; it reads EEMRPQFRYTLIS. Residues 215-232 form a helical membrane-spanning segment; that stretch reads IKAVFIGVIMSTIMYRIF. At 233-252 the chain is on the periplasmic side; that stretch reads NHEVALIDVGKLSDAPLNTQ. Residues 253–281 traverse the membrane as a helical segment; the sequence is WLYLILGIIFGIFGPIFNKWVLGMQDLLH. Residues 282-287 lie on the Cytoplasmic side of the membrane; sequence RVHGGN. Residues 288–309 form a helical membrane-spanning segment; it reads ITKWVLMGGAIGGLCGLLGFVA. Over 310–329 the chain is Periplasmic; the sequence is PATSGGGFNLIPIATAGNFS. A run of 2 helical transmembrane segments spans residues 330–349 and 355–376; these read MGMLVFIFVARVITTLLCFS and GIFAPMLALGTVLGTAFGMVVV. The Selectivity filter part_3 signature appears at 355–359; sequence GIFAP. Residues Ile-356 and Phe-357 each coordinate chloride. The Periplasmic segment spans residues 377 to 386; the sequence is ELFPQYHLEA. The helical intramembrane region spans 387 to 401; sequence GTFAIAGMGALLAAS. Residues 402-404 constitute an intramembrane region (note=Loop between two helices); sequence IRA. The helical intramembrane region spans 405–416; it reads PLTGIILVLEMT. An intramembrane region (note=Loop between two helices) is located at residues 417 to 421; sequence DNYQL. The chain crosses the membrane as a helical span at residues 422-438; that stretch reads ILPMIITGLGATLLAQF. The Cytoplasmic segment spans residues 439-473; that stretch reads TGGKPLYSAILARTLAKQEAEQLARSKAASASENT. Residue Tyr-445 participates in chloride binding.

Belongs to the chloride channel (TC 2.A.49) family. ClcA subfamily. As to quaternary structure, homodimer.

Its subcellular location is the cell inner membrane. It carries out the reaction 2 chloride(in) + H(+)(out) = 2 chloride(out) + H(+)(in). Proton-coupled chloride transporter. Functions as antiport system and exchanges two chloride ions for 1 proton. Probably acts as an electrical shunt for an outwardly-directed proton pump that is linked to amino acid decarboxylation, as part of the extreme acid resistance (XAR) response. The sequence is that of H(+)/Cl(-) exchange transporter ClcA from Shigella boydii serotype 18 (strain CDC 3083-94 / BS512).